A 2145-amino-acid polypeptide reads, in one-letter code: Adenylate cyclase (2145 aa).

4 disordered regions span residues 1–115 (MPRN…RMSD), 127–236 (DPAG…SGAR), 266–307 (GKEH…PVPK), and 329–547 (VRDI…GPTD). 3 stretches are compositionally biased toward low complexity: residues 7 to 23 (SSRF…SARS), 35 to 68 (PSAS…APSR), and 89 to 107 (SPTS…SSNS). 2 stretches are compositionally biased toward polar residues: residues 134–148 (SRTQ…SLSQ) and 159–205 (PASS…TESP). Low complexity predominate over residues 217-234 (SIASITTTASSQGSRASG). A compositionally biased stretch (basic residues) spans 269–281 (HRSHSYSHARPHR). Polar residues predominate over residues 343–357 (NDSSQQNNPPKTSGS). The segment covering 377–403 (KSNEDPRSLRPTVSREDSTISVPKDRN) has biased composition (basic and acidic residues). Residues 404-441 (GSSTMYGTRSRAQSPAPSTTGSYWGHKSGSTDGQTSPG) are compositionally biased toward polar residues. Composition is skewed to basic and acidic residues over residues 454–466 (RLKE…DLKK) and 495–511 (ADGK…RPDL). The region spanning 637 to 727 (HNYCIRVFRA…IEDIGREDNS (91 aa)) is the Ras-associating domain. LRR repeat units lie at residues 779-800 (EIIS…FISV), 803-824 (NLRD…FGYA), 826-847 (RLTM…ALHN), 850-871 (GLLK…FEAF), 873-894 (VLRT…LAKL), 896-917 (NLVD…VGQM), 919-941 (SLER…FKNL), 943-964 (SLRE…SQLP), 965-986 (KLEI…FERV), 987-1006 (RSIK…APVP), 1007-1028 (TLKA…FHNM), 1030-1051 (NLER…IGNL), 1053-1074 (RLEY…IGCL), 1076-1097 (ELKR…LWWA), and 1099-1120 (KLDY…ASRA). A disordered region spans residues 1114–1226 (PKPASRAPHP…SSRKDSSHTQ (113 aa)). Composition is skewed to low complexity over residues 1160–1179 (RPSQ…VPGG) and 1201–1217 (SRST…PTAS). LRR repeat units lie at residues 1235–1255 (SLRY…DQLC), 1259–1280 (NLRV…SIKS), 1283–1304 (QLVE…DLEE), 1307–1328 (MLQT…ISRA), 1330–1352 (KLTV…PYDW), and 1359–1380 (NLRY…SVPT). The 278-residue stretch at 1432–1709 (PYGMADTLGS…NKMTVQMLGV (278 aa)) folds into the PPM-type phosphatase domain. Positions 1718–1760 (RSRQHKGQSMPVYASLQDDGGSSTGMRRARKARDGPLDSTLGR) are disordered. Positions 1773 to 1910 (AIVFTDIKNS…PMVNKASRIS (138 aa)) constitute a Guanylate cyclase domain. Asp1778 and Asp1821 together coordinate Mg(2+).

Belongs to the adenylyl cyclase class-3 family. Mg(2+) serves as cofactor.

It catalyses the reaction ATP = 3',5'-cyclic AMP + diphosphate. In terms of biological role, plays essential roles in regulation of cellular metabolism by catalyzing the synthesis of a second messenger, cAMP. In Podospora anserina (Pleurage anserina), this protein is Adenylate cyclase.